We begin with the raw amino-acid sequence, 342 residues long: Cytoplasmic tRNA 2-thiolation protein 1 (342 aa).

Belongs to the TtcA family. CTU1/NCS6/ATPBD3 subfamily.

Its subcellular location is the cytoplasm. The protein operates within tRNA modification; 5-methoxycarbonylmethyl-2-thiouridine-tRNA biosynthesis. In terms of biological role, plays a central role in 2-thiolation of mcm(5)S(2)U at tRNA wobble positions of tRNA(Lys), tRNA(Glu) and tRNA(Gln). Directly binds tRNAs and probably acts by catalyzing adenylation of tRNAs, an intermediate required for 2-thiolation. It is unclear whether it acts as a sulfurtransferase that transfers sulfur from thiocarboxylated URM1 onto the uridine of tRNAs at wobble position. The polypeptide is Cytoplasmic tRNA 2-thiolation protein 1 (Anopheles gambiae (African malaria mosquito)).